A 275-amino-acid polypeptide reads, in one-letter code: Transcription factor JUNGBRUNNEN 1 (275 aa).

The interval 1–24 is disordered; it reads MSGEGNLGKDHEEENEAPLPGFRF. An NAC domain is found at 18–167; sequence PLPGFRFHPT…VWTLCRIFKR (150 aa). Residues 115–173 mediate DNA binding; that stretch reads VGLKKSLVYYLGSAGKGTKTDWMMHEFRLPSTTKTDSPAQQAEVWTLCRIFKRVTSQRN. Residues 191-219 are disordered; sequence CSKTSSLDSDHTSHRTVDSMSHEPPLPQP. Over residues 198–211 the composition is skewed to basic and acidic residues; the sequence is DSDHTSHRTVDSMS.

In terms of tissue distribution, expressed in roots, root caps, cotyledons, tips and margin of young leaves, senescent regions of fully expanded leaves and floral tissues, including old sepals, petals, staments, mature anthers and pollen grains. Not detected in the abscission zone of open flowers, emerging lateral roots and root meristematic zones.

It localises to the nucleus. Transcription factor that binds to the 5'- RRYGCCGT-3' consensus core sequence. Central longevity regulator. Negative regulator of leaf senescence. Modulates cellular H(2)O(2) levels and enhances tolerance to various abiotic stresses through the regulation of DREB2A. This is Transcription factor JUNGBRUNNEN 1 (JUB1) from Arabidopsis thaliana (Mouse-ear cress).